A 348-amino-acid polypeptide reads, in one-letter code: Autophagy-related protein 27 (348 aa).

The first 20 residues, 1-20 (MYRPDLLAFLLPLLAAPVFS), serve as a signal peptide directing secretion. Residues 21–274 (AETLDCGKIR…DDGGDNSSSH (254 aa)) are Lumenal-facing. Residues 24-255 (LDCGKIRADG…TWHTKYACEK (232 aa)) form the MRH domain. 3 cysteine pairs are disulfide-bonded: Cys-26–Cys-69, Cys-82–Cys-89, and Cys-175–Cys-253. Residues Asn-61 and Asn-84 are each glycosylated (N-linked (GlcNAc...) asparagine). The segment covering 180 to 208 (EGTEGEWVSEEKYEKRADEKKDDDKKEDG) has biased composition (basic and acidic residues). Positions 180–219 (EGTEGEWVSEEKYEKRADEKKDDDKKEDGGDKDEGESTLE) are disordered. N-linked (GlcNAc...) asparagine glycans are attached at residues Asn-226 and Asn-270. A helical membrane pass occupies residues 275–295 (WGFFTWFVLIAFLLIAGYLIF). Over 296–348 (SSWINFTRYGARGWDLLPHSDTIRDIPYLLKDFIRRILNTVQGTGSRGGYSAV) the chain is Cytoplasmic.

The protein belongs to the ATG27 family. Forms a complex with ATG9 and ATG23.

The protein localises to the cytoplasmic vesicle membrane. The protein resides in the golgi apparatus membrane. Its subcellular location is the mitochondrion membrane. It is found in the preautophagosomal structure membrane. Its function is as follows. Effector of VPS34 phosphatidylinositol 3-phosphate kinase signaling. Regulates the cytoplasm to vacuole transport (Cvt) vesicle formation. Plays a role in ATG protein retrieval from the pre-autophagosomal structure (PAS) and is especially required for autophagy-dependent cycling of ATG9. Autophagy is required for proper vegetative growth, asexual/sexual reproduction, and full virulence. Autophagy is particularly involved in the biosynthesis of deoxynivalenol (DON), an important virulence determinant. This chain is Autophagy-related protein 27, found in Gibberella zeae (strain ATCC MYA-4620 / CBS 123657 / FGSC 9075 / NRRL 31084 / PH-1) (Wheat head blight fungus).